We begin with the raw amino-acid sequence, 370 residues long: Holliday junction branch migration complex subunit RuvB (370 aa).

The disordered stretch occupies residues 1–53; sequence MAILSSQKQPLEPEPSKNPQSVQQPGLPPSTPEQGLLTAEVSPEERLSRTDDI. Residues 13–214 are large ATPase domain (RuvB-L); that stretch reads PEPSKNPQSV…FGLIQRLRFY (202 aa). Basic and acidic residues predominate over residues 43 to 53; sequence PEERLSRTDDI. Residues Ile53, Arg54, Gly95, Lys98, Thr99, Thr100, 161–163, Arg204, Tyr214, and Arg251 contribute to the ATP site; that span reads EDF. Residue Thr99 participates in Mg(2+) binding. The interval 215–285 is small ATPAse domain (RuvB-S); it reads EPEELSQIIL…IASEALQLFN (71 aa). Positions 288–370 are head domain (RuvB-H); sequence PCGLDWTDRR…TPPDGQLSLL (83 aa). DNA is bound by residues Arg343 and Arg348.

Belongs to the RuvB family. In terms of assembly, homohexamer. Forms an RuvA(8)-RuvB(12)-Holliday junction (HJ) complex. HJ DNA is sandwiched between 2 RuvA tetramers; dsDNA enters through RuvA and exits via RuvB. An RuvB hexamer assembles on each DNA strand where it exits the tetramer. Each RuvB hexamer is contacted by two RuvA subunits (via domain III) on 2 adjacent RuvB subunits; this complex drives branch migration. In the full resolvosome a probable DNA-RuvA(4)-RuvB(12)-RuvC(2) complex forms which resolves the HJ.

The protein resides in the cytoplasm. The catalysed reaction is ATP + H2O = ADP + phosphate + H(+). Its function is as follows. The RuvA-RuvB-RuvC complex processes Holliday junction (HJ) DNA during genetic recombination and DNA repair, while the RuvA-RuvB complex plays an important role in the rescue of blocked DNA replication forks via replication fork reversal (RFR). RuvA specifically binds to HJ cruciform DNA, conferring on it an open structure. The RuvB hexamer acts as an ATP-dependent pump, pulling dsDNA into and through the RuvAB complex. RuvB forms 2 homohexamers on either side of HJ DNA bound by 1 or 2 RuvA tetramers; 4 subunits per hexamer contact DNA at a time. Coordinated motions by a converter formed by DNA-disengaged RuvB subunits stimulates ATP hydrolysis and nucleotide exchange. Immobilization of the converter enables RuvB to convert the ATP-contained energy into a lever motion, pulling 2 nucleotides of DNA out of the RuvA tetramer per ATP hydrolyzed, thus driving DNA branch migration. The RuvB motors rotate together with the DNA substrate, which together with the progressing nucleotide cycle form the mechanistic basis for DNA recombination by continuous HJ branch migration. Branch migration allows RuvC to scan DNA until it finds its consensus sequence, where it cleaves and resolves cruciform DNA. In Cyanothece sp. (strain PCC 7425 / ATCC 29141), this protein is Holliday junction branch migration complex subunit RuvB.